Here is a 474-residue protein sequence, read N- to C-terminus: Protein nucleotidyltransferase YdiU (474 aa).

Residues Gly-89, Gly-91, Arg-92, Lys-112, Asp-124, Gly-125, Arg-178, and Arg-185 each contribute to the ATP site. Asp-262 functions as the Proton acceptor in the catalytic mechanism. Positions 263 and 272 each coordinate Mg(2+). Asp-272 is a binding site for ATP.

Belongs to the SELO family. The cofactor is Mg(2+). Mn(2+) is required as a cofactor.

The enzyme catalyses L-seryl-[protein] + ATP = 3-O-(5'-adenylyl)-L-seryl-[protein] + diphosphate. It carries out the reaction L-threonyl-[protein] + ATP = 3-O-(5'-adenylyl)-L-threonyl-[protein] + diphosphate. It catalyses the reaction L-tyrosyl-[protein] + ATP = O-(5'-adenylyl)-L-tyrosyl-[protein] + diphosphate. The catalysed reaction is L-histidyl-[protein] + UTP = N(tele)-(5'-uridylyl)-L-histidyl-[protein] + diphosphate. The enzyme catalyses L-seryl-[protein] + UTP = O-(5'-uridylyl)-L-seryl-[protein] + diphosphate. It carries out the reaction L-tyrosyl-[protein] + UTP = O-(5'-uridylyl)-L-tyrosyl-[protein] + diphosphate. Nucleotidyltransferase involved in the post-translational modification of proteins. It can catalyze the addition of adenosine monophosphate (AMP) or uridine monophosphate (UMP) to a protein, resulting in modifications known as AMPylation and UMPylation. This Trichodesmium erythraeum (strain IMS101) protein is Protein nucleotidyltransferase YdiU.